The chain runs to 510 residues: ATP synthase subunit alpha (510 aa).

169-176 contacts ATP; that stretch reads GDRQTGKT.

Belongs to the ATPase alpha/beta chains family. As to quaternary structure, F-type ATPases have 2 components, CF(1) - the catalytic core - and CF(0) - the membrane proton channel. CF(1) has five subunits: alpha(3), beta(3), gamma(1), delta(1), epsilon(1). CF(0) has four main subunits: a(1), b(1), b'(1) and c(9-12).

Its subcellular location is the cell inner membrane. The enzyme catalyses ATP + H2O + 4 H(+)(in) = ADP + phosphate + 5 H(+)(out). Its function is as follows. Produces ATP from ADP in the presence of a proton gradient across the membrane. The alpha chain is a regulatory subunit. This Rhodopseudomonas palustris (strain HaA2) protein is ATP synthase subunit alpha.